We begin with the raw amino-acid sequence, 88 residues long: Putative cancer susceptibility gene HEPN1 protein (88 aa).

In terms of tissue distribution, expressed in liver. Expression is either down-regulated or lost in hepatocellular carcinomas (HCC).

It localises to the cytoplasm. This Homo sapiens (Human) protein is Putative cancer susceptibility gene HEPN1 protein (HEPN1).